A 285-amino-acid chain; its full sequence is 4-hydroxybenzoate octaprenyltransferase (285 aa).

7 consecutive transmembrane segments (helical) span residues 20-37, 96-116, 138-158, 166-186, 211-231, 234-254, and 262-282; these read IGIY…WLAA, FFFV…PFTI, WPQA…FAAI, AWVI…AYAV, IIGF…DLFG, WLYY…QYLL, and AFKA…GIML.

The protein belongs to the UbiA prenyltransferase family. Mg(2+) is required as a cofactor.

The protein resides in the cell inner membrane. It carries out the reaction all-trans-octaprenyl diphosphate + 4-hydroxybenzoate = 4-hydroxy-3-(all-trans-octaprenyl)benzoate + diphosphate. Its pathway is cofactor biosynthesis; ubiquinone biosynthesis. Its function is as follows. Catalyzes the prenylation of para-hydroxybenzoate (PHB) with an all-trans polyprenyl group. Mediates the second step in the final reaction sequence of ubiquinone-8 (UQ-8) biosynthesis, which is the condensation of the polyisoprenoid side chain with PHB, generating the first membrane-bound Q intermediate 3-octaprenyl-4-hydroxybenzoate. The polypeptide is 4-hydroxybenzoate octaprenyltransferase (Hydrogenovibrio crunogenus (strain DSM 25203 / XCL-2) (Thiomicrospira crunogena)).